A 232-amino-acid chain; its full sequence is Nucleoside diphosphate kinase 2, chloroplastic (232 aa).

Residues 1-79 (MGCLSVVGAS…TRIFLPHLVA (79 aa)) constitute a chloroplast transit peptide. Positions 92, 140, 168, 174, 185, and 195 each coordinate ATP. The Pros-phosphohistidine intermediate role is filled by His198.

Belongs to the NDK family. Mg(2+) serves as cofactor.

It is found in the plastid. Its subcellular location is the chloroplast. The enzyme catalyses a 2'-deoxyribonucleoside 5'-diphosphate + ATP = a 2'-deoxyribonucleoside 5'-triphosphate + ADP. It carries out the reaction a ribonucleoside 5'-diphosphate + ATP = a ribonucleoside 5'-triphosphate + ADP. Major role in the synthesis of nucleoside triphosphates other than ATP. The ATP gamma phosphate is transferred to the NDP beta phosphate via a ping-pong mechanism, using a phosphorylated active-site intermediate. The sequence is that of Nucleoside diphosphate kinase 2, chloroplastic from Nicotiana tabacum (Common tobacco).